The sequence spans 126 residues: L-alanine exporter AlaE (126 aa).

A helical transmembrane segment spans residues 23 to 43; that stretch reads FALVVYCFFTGMAIEILLSGM.

Belongs to the AlaE exporter family.

It is found in the cell inner membrane. Its function is as follows. Exports L-alanine. This chain is L-alanine exporter AlaE, found in Sodalis glossinidius (strain morsitans).